A 259-amino-acid chain; its full sequence is Ribosomal RNA small subunit methyltransferase A (259 aa).

Residues Asn-15, Leu-17, Gly-41, Glu-62, Asp-86, and Asn-105 each contribute to the S-adenosyl-L-methionine site.

This sequence belongs to the class I-like SAM-binding methyltransferase superfamily. rRNA adenine N(6)-methyltransferase family. RsmA subfamily.

It is found in the cytoplasm. The enzyme catalyses adenosine(1518)/adenosine(1519) in 16S rRNA + 4 S-adenosyl-L-methionine = N(6)-dimethyladenosine(1518)/N(6)-dimethyladenosine(1519) in 16S rRNA + 4 S-adenosyl-L-homocysteine + 4 H(+). Functionally, specifically dimethylates two adjacent adenosines (A1518 and A1519) in the loop of a conserved hairpin near the 3'-end of 16S rRNA in the 30S particle. May play a critical role in biogenesis of 30S subunits. This Mycoplasmopsis synoviae (strain 53) (Mycoplasma synoviae) protein is Ribosomal RNA small subunit methyltransferase A.